The primary structure comprises 276 residues: SKA complex subunit 1 homolog (276 aa).

Residues 48-78 (VDVSLTAMEAQLQAVRRRLQEEREAFPKAKK) adopt a coiled-coil conformation.

This sequence belongs to the SKA1 family.

This chain is SKA complex subunit 1 homolog, found in Oryza sativa subsp. japonica (Rice).